A 352-amino-acid polypeptide reads, in one-letter code: DNA polymerase IV (352 aa).

One can recognise a UmuC domain in the interval 4–185 (IIHVDMDCFF…LPLSKIPGVG (182 aa)). The Mg(2+) site is built by D8 and D103. E104 is a catalytic residue.

This sequence belongs to the DNA polymerase type-Y family. As to quaternary structure, monomer. It depends on Mg(2+) as a cofactor.

The protein localises to the cytoplasm. It catalyses the reaction DNA(n) + a 2'-deoxyribonucleoside 5'-triphosphate = DNA(n+1) + diphosphate. Poorly processive, error-prone DNA polymerase involved in untargeted mutagenesis. Copies undamaged DNA at stalled replication forks, which arise in vivo from mismatched or misaligned primer ends. These misaligned primers can be extended by PolIV. Exhibits no 3'-5' exonuclease (proofreading) activity. May be involved in translesional synthesis, in conjunction with the beta clamp from PolIII. This Yersinia enterocolitica serotype O:8 / biotype 1B (strain NCTC 13174 / 8081) protein is DNA polymerase IV.